Reading from the N-terminus, the 560-residue chain is Eukaryotic translation initiation factor 3 subunit D-1 (560 aa).

Positions 98-166 are disordered; it reads VQKPPHQRGR…RGPPPKMRES (69 aa). Residues 100-121 show a composition bias toward basic residues; it reads KPPHQRGRFRNMRNSRSGRGRN. Threonine 128 carries the post-translational modification Phosphothreonine. Residues 147–156 are compositionally biased toward basic residues; sequence GRGMGKKFGH. The tract at residues 291 to 305 is RNA gate; the sequence is EFDLLTVNESSVEPP.

This sequence belongs to the eIF-3 subunit D family. As to quaternary structure, component of the eukaryotic translation initiation factor 3 (eIF-3) complex. The eIF-3 complex interacts with pix.

It is found in the cytoplasm. MRNA cap-binding component of the eukaryotic translation initiation factor 3 (eIF-3) complex, which is involved in protein synthesis of a specialized repertoire of mRNAs and, together with other initiation factors, stimulates binding of mRNA and methionyl-tRNAi to the 40S ribosome. The eIF-3 complex specifically targets and initiates translation of a subset of mRNAs involved in cell proliferation. In the eIF-3 complex, eif3d specifically recognizes and binds the 7-methylguanosine cap of a subset of mRNAs. In Drosophila yakuba (Fruit fly), this protein is Eukaryotic translation initiation factor 3 subunit D-1.